Consider the following 301-residue polypeptide: NAD kinase (301 aa).

Aspartate 73 serves as the catalytic Proton acceptor. Residues 73–74 (DG), 160–161 (NE), arginine 188, aspartate 190, alanine 198, 201–206 (TAYNIS), alanine 225, and glutamine 257 each bind NAD(+).

It belongs to the NAD kinase family. It depends on a divalent metal cation as a cofactor.

The protein localises to the cytoplasm. It catalyses the reaction NAD(+) + ATP = ADP + NADP(+) + H(+). Its function is as follows. Involved in the regulation of the intracellular balance of NAD and NADP, and is a key enzyme in the biosynthesis of NADP. Catalyzes specifically the phosphorylation on 2'-hydroxyl of the adenosine moiety of NAD to yield NADP. The protein is NAD kinase of Helicobacter hepaticus (strain ATCC 51449 / 3B1).